The primary structure comprises 312 residues: Dehydrin CAS31 (312 aa).

Disordered stretches follow at residues 1 to 88 (MSQY…HTGG) and 248 to 287 (GTEQNTYGTGTGTGHGTTGYGSTGTGHGTTGYGDEQHHGE). Residues 21–30 (PLTSQGQVDQ) show a composition bias toward polar residues. The span at 35–46 (ISGGGMTGATGH) shows a compositional bias: gly residues. Residues 55-66 (HGVGVDQTTGFG) are compositionally biased toward low complexity. Gly residues-rich tracts occupy residues 67 to 88 (SNTGTGTGYGTHTGSGGTHTGG) and 256 to 278 (TGTGTGHGTTGYGSTGTGHGTTG).

The protein belongs to the plant dehydrin family. Interacts with the leghemoglobin LB120-1 in the cytoplasm; this interaction leads to LB120-1 protection from denaturation under thermal and drought stresses. As to expression, expressed in nodules and roots.

It localises to the cytoplasm. In terms of biological role, intrinsically disordered protein acting as a chaperone. Ensures leghemoglobins (e.g. LB120-1) protection from denaturation under thermal and drought stresses to delay root nodule nitrogenase inactivation and subsequent nodule senescence, thus supporting symbiotic nitrogen fixation (SNF). This Medicago truncatula (Barrel medic) protein is Dehydrin CAS31.